The sequence spans 186 residues: UPF0669 protein C6orf120 homolog (186 aa).

An N-terminal signal peptide occupies residues 1 to 19 (MVPFWAGLLVLSALPQTLG). Asparagine 47 is a glycosylation site (N-linked (GlcNAc...) asparagine). Residues 141-165 (KNSYSSDETPGQPRQSQGPEDTEEE) are disordered. The segment covering 142 to 159 (NSYSSDETPGQPRQSQGP) has biased composition (polar residues).

This sequence belongs to the UPF0669 family.

The protein localises to the secreted. The protein is UPF0669 protein C6orf120 homolog of Danio rerio (Zebrafish).